A 148-amino-acid chain; its full sequence is Large ribosomal subunit protein bL9 (148 aa).

It belongs to the bacterial ribosomal protein bL9 family.

Functionally, binds to the 23S rRNA. The sequence is that of Large ribosomal subunit protein bL9 from Pseudomonas fluorescens (strain Pf0-1).